The following is a 486-amino-acid chain: Serine/threonine-protein kinase 4 (486 aa).

The region spanning F29–V280 is the Protein kinase domain. ATP contacts are provided by residues L35–V43 and K58. D148 (proton acceptor) is an active-site residue. T182 bears the Phosphothreonine; by autocatalysis mark. A coiled-coil region spans residues I288 to T324. The disordered stretch occupies residues E305–A332. Residues D312–D325 show a composition bias toward acidic residues. One can recognise an SARAH domain in the interval Y432–K479.

This sequence belongs to the protein kinase superfamily. STE Ser/Thr protein kinase family. STE20 subfamily. As to quaternary structure, homodimer; mediated via the coiled-coil region. Requires Mg(2+) as cofactor. Proteolytically cleaved by caspase-3 during apoptosis at Asp-325 resulting in a 37 kDa form. Proteolytic cleavage results in kinase activation and nuclear translocation of the truncated form (MST1/N).

Its subcellular location is the cytoplasm. It localises to the nucleus. The catalysed reaction is L-seryl-[protein] + ATP = O-phospho-L-seryl-[protein] + ADP + H(+). The enzyme catalyses L-threonyl-[protein] + ATP = O-phospho-L-threonyl-[protein] + ADP + H(+). With respect to regulation, the C-terminal non-catalytic region inhibits the kinase activity, the enzyme is activated by caspase-cleavage. Homodimerization and autophosphorylation of Thr-182 is also required for full activation. In terms of biological role, stress-activated, pro-apoptotic kinase which, following caspase-cleavage, enters the nucleus and induces chromatin condensation followed by internucleosomal DNA fragmentation. Key component of the Hippo signaling pathway which plays a pivotal role in organ size control and tumor suppression by restricting proliferation and promoting apoptosis. The core of this pathway is composed of a kinase cascade wherein STK3/MST2 and STK4/MST1, in complex with its regulatory protein SAV1, phosphorylates and activates LATS1/2 in complex with its regulatory protein MOB1, which in turn phosphorylates and inactivates YAP1 oncoprotein and WWTR1/TAZ. Phosphorylation of YAP1 by LATS2 inhibits its translocation into the nucleus to regulate cellular genes important for cell proliferation, cell death, and cell migration. Phosphorylates 'Ser-14' of histone H2B (H2BS14ph) during apoptosis. Phosphorylates FOXO3 upon oxidative stress, which results in its nuclear translocation and cell death initiation. The sequence is that of Serine/threonine-protein kinase 4 (STK4) from Gallus gallus (Chicken).